The following is a 240-amino-acid chain: Large ribosomal subunit protein uL3 (240 aa).

Disordered regions lie at residues valine 139–glycine 164 and aspartate 215–valine 240. Glutamine 151 is subject to N5-methylglutamine. Over residues alanine 225 to valine 240 the composition is skewed to low complexity.

This sequence belongs to the universal ribosomal protein uL3 family. As to quaternary structure, part of the 50S ribosomal subunit. Forms a cluster with proteins L14 and L19. In terms of processing, methylated by PrmB.

Functionally, one of the primary rRNA binding proteins, it binds directly near the 3'-end of the 23S rRNA, where it nucleates assembly of the 50S subunit. This is Large ribosomal subunit protein uL3 from Rhodopseudomonas palustris (strain BisA53).